The sequence spans 272 residues: Putative phosphoenolpyruvate synthase regulatory protein (272 aa).

152-159 serves as a coordination point for ADP; the sequence is GVSRCGKT.

It belongs to the pyruvate, phosphate/water dikinase regulatory protein family. PSRP subfamily.

The catalysed reaction is [pyruvate, water dikinase] + ADP = [pyruvate, water dikinase]-phosphate + AMP + H(+). The enzyme catalyses [pyruvate, water dikinase]-phosphate + phosphate + H(+) = [pyruvate, water dikinase] + diphosphate. Functionally, bifunctional serine/threonine kinase and phosphorylase involved in the regulation of the phosphoenolpyruvate synthase (PEPS) by catalyzing its phosphorylation/dephosphorylation. The polypeptide is Putative phosphoenolpyruvate synthase regulatory protein (Pseudomonas putida (strain ATCC 700007 / DSM 6899 / JCM 31910 / BCRC 17059 / LMG 24140 / F1)).